Consider the following 528-residue polypeptide: Glucose-6-phosphate isomerase (528 aa).

Catalysis depends on glutamate 322, which acts as the Proton donor. Catalysis depends on residues histidine 351 and lysine 455.

The protein belongs to the GPI family.

The protein localises to the cytoplasm. The enzyme catalyses alpha-D-glucose 6-phosphate = beta-D-fructose 6-phosphate. Its pathway is carbohydrate biosynthesis; gluconeogenesis. The protein operates within carbohydrate degradation; glycolysis; D-glyceraldehyde 3-phosphate and glycerone phosphate from D-glucose: step 2/4. In terms of biological role, catalyzes the reversible isomerization of glucose-6-phosphate to fructose-6-phosphate. The sequence is that of Glucose-6-phosphate isomerase from Synechococcus elongatus (strain ATCC 33912 / PCC 7942 / FACHB-805) (Anacystis nidulans R2).